The following is a 130-amino-acid chain: Small ribosomal subunit protein uS9 (130 aa).

It belongs to the universal ribosomal protein uS9 family.

The protein is Small ribosomal subunit protein uS9 of Chromobacterium violaceum (strain ATCC 12472 / DSM 30191 / JCM 1249 / CCUG 213 / NBRC 12614 / NCIMB 9131 / NCTC 9757 / MK).